A 177-amino-acid polypeptide reads, in one-letter code: MPVKRSLKLDGLLEENSFDPSKITRKKSVITYSPTTGTCQMSLFASPTSSEEQKHRNGLSNEKRKKLNHPSLTESKESTTKDNDEFMMLLSKVEKLSEEIMEIMQNLSSIQALEGSRELENLIGISCASHFLKREMQKTKELMTKVNKQKLFEKSTGLPHKASRHLDSYEFLKAILN.

K8 participates in a covalent cross-link: Glycyl lysine isopeptide (Lys-Gly) (interchain with G-Cter in SUMO2). Positions 9–13 (LDGLL) match the LXXLL motif motif. The residue at position 17 (S17) is a Phosphoserine. The tract at residues 20-50 (PSKITRKKSVITYSPTTGTCQMSLFASPTSS) is DD1. A Glycyl lysine isopeptide (Lys-Gly) (interchain with G-Cter in SUMO2) cross-link involves residue K22. At S28 the chain carries Phosphoserine. Polar residues predominate over residues 41–50 (MSLFASPTSS). Positions 41-81 (MSLFASPTSSEEQKHRNGLSNEKRKKLNHPSLTESKESTTK) are disordered. A Nuclear localization signal motif is present at residues 63–66 (KRKK). S71 carries the post-translational modification Phosphoserine. Residues 83-113 (NDEFMMLLSKVEKLSEEIMEIMQNLSSIQAL) are a coiled coil. An LXXIL motif motif is present at residues 172 to 176 (LKAIL).

As to quaternary structure, homodimer; mediated by the coiled coil domain. Isoform 3, but not other isoforms, interacts with the cytoplasmic tail of integrin ITGB3. The relevance of the interaction with ITGB3 is however uncertain, since isoform 3 is mainly nuclear. Interacts with CCNA2 and MTA1. Interacts with NFKB1 NF-kappa-B subunit. Component of the CENPA-CAD complex, composed of CENPI, CENPK, CENPL, CENPO, CENPP, CENPQ, CENPR and CENPS. The CENPA-CAD complex interacts with the CENPA-NAC complex, at least composed of CENPA, CENPC, CENPH, CENPM, CENPN, CENPT and CENPU. Interacts with TASOR. In terms of tissue distribution, widely expressed. Expressed in spleen, thymus, prostate, ovary, small intestine and white blood cells. Highly expressed in testis and colon. Isoform 4 is expressed in platelets, lymphocytes and granulocytes.

The protein localises to the nucleus. It is found in the chromosome. It localises to the centromere. Its subcellular location is the kinetochore. The protein resides in the cytoplasm. In terms of biological role, transcription coregulator that can have both coactivator and corepressor functions. Isoform 1, but not other isoforms, is involved in the coactivation of nuclear receptors for retinoid X (RXRs) and thyroid hormone (TRs) in a ligand-dependent fashion. In contrast, it does not coactivate nuclear receptors for retinoic acid, vitamin D, progesterone receptor, nor glucocorticoid. Acts as a coactivator for estrogen receptor alpha. Acts as a transcriptional corepressor via its interaction with the NFKB1 NF-kappa-B subunit, possibly by interfering with the transactivation domain of NFKB1. Induces apoptosis in breast cancer cells, but not in other cancer cells, via a caspase-2 mediated pathway that involves mitochondrial membrane permeabilization but does not require other caspases. May also act as an inhibitor of cyclin A-associated kinase. Also acts a component of the CENPA-CAD (nucleosome distal) complex, a complex recruited to centromeres which is involved in assembly of kinetochore proteins, mitotic progression and chromosome segregation. May be involved in incorporation of newly synthesized CENPA into centromeres via its interaction with the CENPA-NAC complex. This is Centromere protein R (ITGB3BP) from Homo sapiens (Human).